We begin with the raw amino-acid sequence, 422 residues long: Testin (422 aa).

Positions 92-199 constitute a PET domain; the sequence is MILTSPVAAK…GDVKLPKEVE (108 aa). The interval 135-165 is disordered; the sequence is QPVAGSEGAQYRKKQLAKQLPAHDQDPSKCH. The segment covering 155-165 has biased composition (basic and acidic residues); that stretch reads PAHDQDPSKCH. 3 consecutive LIM zinc-binding domains span residues 234 to 299, 300 to 359, and 360 to 422; these read YYCF…SEKP, RCAG…NHAV, and SCQG…KMSS.

Belongs to the prickle / espinas / testin family.

Its subcellular location is the cytoplasm. The protein localises to the cell cortex. It is found in the cell junction. It localises to the focal adhesion. Functionally, scaffold protein that may play a role in cell adhesion, cell spreading and in the reorganization of the actin cytoskeleton. May inhibit cell growth. Regulates cranial neural crest migration. Acts together with prickle1 to control axial elongation. In Xenopus tropicalis (Western clawed frog), this protein is Testin.